Consider the following 228-residue polypeptide: Ribosomal RNA small subunit methyltransferase G (228 aa).

Residues Gly70, Ala121–Glu122, and Arg138 contribute to the S-adenosyl-L-methionine site.

The protein belongs to the methyltransferase superfamily. RNA methyltransferase RsmG family.

Its subcellular location is the cytoplasm. In terms of biological role, specifically methylates the N7 position of a guanine in 16S rRNA. The polypeptide is Ribosomal RNA small subunit methyltransferase G (Thermotoga sp. (strain RQ2)).